A 207-amino-acid polypeptide reads, in one-letter code: Ras-related protein Rab-8B (207 aa).

GTP contacts are provided by Ser17, Gly18, Val19, Gly20, Lys21, Thr22, Cys23, Thr35, Ser39, and Thr40. Thr22 serves as a coordination point for Mg(2+). 2 consecutive short sequence motifs (switch) follow at residues 31-45 (DAFNTTFISTIGIDF) and 63-80 (DTAGQERFRTITTAYYRG). Mg(2+)-binding residues include Thr40 and Asp63. Gly66 contacts GTP. Thr72 bears the Phosphothreonine mark. 5 residues coordinate GTP: Asn121, Lys122, Asp124, Ala152, and Lys153. A phosphoserine mark is found at Ser180 and Ser183. At Cys204 the chain carries Cysteine methyl ester. Cys204 carries the S-geranylgeranyl cysteine lipid modification. Positions 205–207 (LLL) are cleaved as a propeptide — removed in mature form.

This sequence belongs to the small GTPase superfamily. Rab family. Associated with actin, delta-catenin and alpha and beta tubulins. Interacts with OTOF. Interacts with PEX5R. Interacts with RAB3IP. Interacts with VIM. Interacts with CDH1. Interacts with MICALL2. Interacts with GDI1, GDI2, CHML and CHM; phosphorylation at Thr-72 disrupts these interactions. Interacts with MICAL1. It depends on Mg(2+) as a cofactor. In terms of processing, phosphorylation of Thr-72 in the switch II region by LRRK2 prevents the association of RAB regulatory proteins, including CHM, CHML and RAB GDP dissociation inhibitors GDI1 and GDI2.

It localises to the cell membrane. Its subcellular location is the cytoplasmic vesicle. The protein resides in the phagosome membrane. The protein localises to the endosome membrane. The catalysed reaction is GTP + H2O = GDP + phosphate + H(+). Regulated by guanine nucleotide exchange factors (GEFs) including RAB3IP/RABIN8 which promotes the exchange of bound GDP for free GTP. Regulated by GTPase activating proteins (GAPs) which increase the GTP hydrolysis activity. Inhibited by GDP dissociation inhibitors (GDIs). Functionally, the small GTPases Rab are key regulators of intracellular membrane trafficking, from the formation of transport vesicles to their fusion with membranes. Rabs cycle between an inactive GDP-bound form and an active GTP-bound form that is able to recruit to membranes different sets of downstream effectors directly responsible for vesicle formation, movement, tethering and fusion. RAB8B may be involved in polarized vesicular trafficking and neurotransmitter release. May participate in cell junction dynamics in Sertoli cells. May also participate in the export of a subset of neosynthesized proteins through a Rab8-Rab10-Rab11-dependent endososomal export route. This Bos taurus (Bovine) protein is Ras-related protein Rab-8B (RAB8B).